A 445-amino-acid chain; its full sequence is Protein kinase C and casein kinase substrate in neurons protein 1 (445 aa).

The region spanning 12 to 282 is the F-BAR domain; it reads DETTDSFWEV…TIVSASAQED (271 aa). Coiled coils occupy residues 146-167 and 183-219; these read AKKLKELETAKKTYHMACKEEK and TTDQQKKLQEKVDKCKNDVQKAKEKYEKSLDELNKCT. A disordered region spans residues 327 to 390; that stretch reads LTQVTHGAEH…PFEEDSKGVR (64 aa). Polar residues-rich tracts occupy residues 338–358 and 368–379; these read TPQTGDRGSVSSYEKNQQYSA and TAAQSASETNGG. The region spanning 386-445 is the SH3 domain; it reads SKGVRVRALYDYEGQEQDELTFKAGDELTKLEDEDEQGWCKGRLDSGQLGLYPANYVEPV.

Interacts with cobl.

It is found in the cytoplasm. Its subcellular location is the cytosol. It localises to the cell membrane. The protein localises to the cell projection. The protein resides in the synapse. It is found in the synaptosome. Its subcellular location is the cytoplasmic vesicle membrane. It localises to the ruffle membrane. The protein localises to the membrane. In terms of biological role, binds to membranes via its F-BAR domain and mediates membrane tubulation. Plays a role in cellular transport processes by recruiting dynamins to membranes. Plays a role in the reorganization of the actin cytoskeleton and in neuron morphogenesis via its interaction with cobl, and by recruiting cobl to the cell cortex. Plays a role in the regulation of neurite formation, neurite branching and the regulation of neurite length. Required for normal synaptic vesicle endocytosis; this process retrieves previously released neurotransmitters to accommodate multiple cycles of neurotransmission. Required for normal excitatory and inhibitory synaptic transmission. Required for normal embryonic development, including normal development of laterality, normal body size and shape, as well as normal brain and heart development. Required for normal development of stereocilia and kinocilia in sensory hair cells of neuromasts in the posterior lateral line organ, and thus also for balance keeping and normal swimming behavior. The sequence is that of Protein kinase C and casein kinase substrate in neurons protein 1 (pacsin1b) from Danio rerio (Zebrafish).